Consider the following 20-residue polypeptide: Cytochrome P450IIB (20 aa).

It belongs to the cytochrome P450 family. Heme is required as a cofactor.

Its subcellular location is the endoplasmic reticulum membrane. The protein localises to the microsome membrane. It carries out the reaction an organic molecule + reduced [NADPH--hemoprotein reductase] + O2 = an alcohol + oxidized [NADPH--hemoprotein reductase] + H2O + H(+). Functionally, cytochromes P450 are a group of heme-thiolate monooxygenases. In liver microsomes, this enzyme is involved in an NADPH-dependent electron transport pathway. This isozyme is active upon P.nitroanisole, aniline, D-benzphetamine, delta(9)-tetrahydrocannabinol (THC) and strychnine. The protein is Cytochrome P450IIB of Cavia porcellus (Guinea pig).